We begin with the raw amino-acid sequence, 130 residues long: Small ribosomal subunit protein uS9 (130 aa).

It belongs to the universal ribosomal protein uS9 family.

The chain is Small ribosomal subunit protein uS9 from Delftia acidovorans (strain DSM 14801 / SPH-1).